The primary structure comprises 80 residues: Defensin-like protein 16 (80 aa).

The N-terminal stretch at 1–29 is a signal peptide; sequence MAKFASIITLIFAALVLFAAFDAPAMVEA. Gln-30 is subject to Pyrrolidone carboxylic acid. Disulfide bonds link Cys-33-Cys-80, Cys-44-Cys-65, Cys-50-Cys-74, and Cys-54-Cys-76.

This sequence belongs to the DEFL family. In terms of tissue distribution, predominantly expressed in leaves.

The protein localises to the secreted. Its function is as follows. Confers broad-spectrum resistance to pathogens. Has antifungal activity in vitro. The chain is Defensin-like protein 16 (PDF1.2A) from Arabidopsis thaliana (Mouse-ear cress).